The following is a 327-amino-acid chain: Ornithine carbamoyltransferase (327 aa).

Carbamoyl phosphate contacts are provided by residues 56 to 59 (STRT), glutamine 83, arginine 107, and 134 to 137 (HPTQ). Residues asparagine 166, aspartate 230, and 234-235 (SM) contribute to the L-ornithine site. Carbamoyl phosphate-binding positions include 269-270 (CL) and arginine 314.

It belongs to the aspartate/ornithine carbamoyltransferase superfamily. OTCase family.

Its subcellular location is the cytoplasm. It carries out the reaction carbamoyl phosphate + L-ornithine = L-citrulline + phosphate + H(+). Its pathway is amino-acid degradation; L-arginine degradation via ADI pathway; carbamoyl phosphate from L-arginine: step 2/2. Reversibly catalyzes the transfer of the carbamoyl group from carbamoyl phosphate (CP) to the N(epsilon) atom of ornithine (ORN) to produce L-citrulline. This is Ornithine carbamoyltransferase from Borreliella burgdorferi (strain ZS7) (Borrelia burgdorferi).